A 377-amino-acid polypeptide reads, in one-letter code: Copper-containing nitrite reductase (377 aa).

Positions 1-35 form a signal peptide, tat-type signal; that stretch reads MTNTLQMTRRTMLTGAAVAGALTPILTSGGGNASP. Plastocyanin-like domains follow at residues 99–194 and 259–360; these read MTFD…IMVL and GAVG…FKVT. 7 residues coordinate Cu cation: histidine 132, histidine 137, histidine 172, cysteine 173, histidine 182, methionine 187, and histidine 343.

The protein belongs to the multicopper oxidase family. As to quaternary structure, homotrimer. Cu(2+) is required as a cofactor. Cu(+) serves as cofactor. Requires FAD as cofactor. Post-translationally, predicted to be exported by the Tat system. The position of the signal peptide cleavage has not been experimentally proven.

It is found in the periplasm. The catalysed reaction is nitric oxide + Fe(III)-[cytochrome c] + H2O = Fe(II)-[cytochrome c] + nitrite + 2 H(+). Its pathway is nitrogen metabolism; nitrate reduction (denitrification); dinitrogen from nitrate: step 2/4. This Rhizobium sullae (Rhizobium hedysari) protein is Copper-containing nitrite reductase (nirK).